The chain runs to 115 residues: Cell division protein FtsL (115 aa).

Residues 1 to 25 (MNTATRVIVAQNVRTRNRTFQITKQ) lie on the Cytoplasmic side of the membrane. A helical transmembrane segment spans residues 26–46 (GVVIVALVIALLCSAFGVVYF). The Periplasmic portion of the chain corresponds to 47–115 (KDLNRRLFIQ…ILVNADAMIE (69 aa)).

It belongs to the FtsL family. In terms of assembly, part of a complex composed of FtsB, FtsL and FtsQ.

The protein localises to the cell inner membrane. Functionally, essential cell division protein. May link together the upstream cell division proteins, which are predominantly cytoplasmic, with the downstream cell division proteins, which are predominantly periplasmic. In Coxiella burnetii (strain RSA 493 / Nine Mile phase I), this protein is Cell division protein FtsL.